A 149-amino-acid chain; its full sequence is D-aminoacyl-tRNA deacylase (149 aa).

Positions 137 to 138 (GP) match the Gly-cisPro motif, important for rejection of L-amino acids motif.

This sequence belongs to the DTD family. As to quaternary structure, homodimer.

The protein localises to the cytoplasm. The catalysed reaction is glycyl-tRNA(Ala) + H2O = tRNA(Ala) + glycine + H(+). The enzyme catalyses a D-aminoacyl-tRNA + H2O = a tRNA + a D-alpha-amino acid + H(+). Its function is as follows. An aminoacyl-tRNA editing enzyme that deacylates mischarged D-aminoacyl-tRNAs. Also deacylates mischarged glycyl-tRNA(Ala), protecting cells against glycine mischarging by AlaRS. Acts via tRNA-based rather than protein-based catalysis; rejects L-amino acids rather than detecting D-amino acids in the active site. By recycling D-aminoacyl-tRNA to D-amino acids and free tRNA molecules, this enzyme counteracts the toxicity associated with the formation of D-aminoacyl-tRNA entities in vivo and helps enforce protein L-homochirality. This is D-aminoacyl-tRNA deacylase from Pediococcus pentosaceus (strain ATCC 25745 / CCUG 21536 / LMG 10740 / 183-1w).